Consider the following 261-residue polypeptide: tRNA pseudouridine synthase A (261 aa).

The Nucleophile role is filled by aspartate 51. Tyrosine 109 provides a ligand contact to substrate.

Belongs to the tRNA pseudouridine synthase TruA family. Homodimer.

The catalysed reaction is uridine(38/39/40) in tRNA = pseudouridine(38/39/40) in tRNA. Its function is as follows. Formation of pseudouridine at positions 38, 39 and 40 in the anticodon stem and loop of transfer RNAs. This is tRNA pseudouridine synthase A from Methylobacillus flagellatus (strain ATCC 51484 / DSM 6875 / VKM B-1610 / KT).